The sequence spans 152 residues: Ribonuclease pancreatic beta-type (152 aa).

An N-terminal signal peptide occupies residues M1–G25. Over residues S31 to S45 the composition is skewed to basic and acidic residues. The tract at residues S31 to Y53 is disordered. Residues K35 and R38 each coordinate substrate. The Proton acceptor role is filled by H40. Cystine bridges form between C54/C112, C68/C123, C86/C138, and C93/C100. Residues K69–T73, K94, and R113 contribute to the substrate site. H147 acts as the Proton donor in catalysis.

The protein belongs to the pancreatic ribonuclease family. Monomer.

Its subcellular location is the secreted. The catalysed reaction is an [RNA] containing cytidine + H2O = an [RNA]-3'-cytidine-3'-phosphate + a 5'-hydroxy-ribonucleotide-3'-[RNA].. It carries out the reaction an [RNA] containing uridine + H2O = an [RNA]-3'-uridine-3'-phosphate + a 5'-hydroxy-ribonucleotide-3'-[RNA].. Its function is as follows. Endonuclease that catalyzes the cleavage of RNA on the 3' side of pyrimidine nucleotides. Acts on single-stranded and double-stranded RNA. This Rattus exulans (Polynesian rat) protein is Ribonuclease pancreatic beta-type.